The primary structure comprises 344 residues: Serpentine receptor class alpha-27 (344 aa).

Helical transmembrane passes span 28–48 (SIWM…TFYL), 67–87 (QILL…FLEI), 128–148 (GLLS…TVYV), 157–177 (MLIT…YGGV), 203–223 (AIFW…LLNI), 252–272 (ICSV…ALAI), and 287–307 (INIQ…VLIY).

The protein belongs to the nematode receptor-like protein sra family.

It is found in the membrane. This is Serpentine receptor class alpha-27 (sra-27) from Caenorhabditis elegans.